We begin with the raw amino-acid sequence, 381 residues long: Creatine kinase M-type (381 aa).

Residues 11 to 98 (KLKFSAEEEF…FDPVIQDRHG (88 aa)) enclose the Phosphagen kinase N-terminal domain. A disordered region spans residues 99–118 (GYKPTDKHRTDLNHENLKGG). In terms of domain architecture, Phosphagen kinase C-terminal spans 125-367 (YVLSSRVRTG…KLMVEMEKKL (243 aa)). ATP contacts are provided by residues 128–132 (SSRVR), His191, Arg236, Arg292, 320–325 (RGTGGV), and Asp335.

It belongs to the ATP:guanido phosphotransferase family. As to quaternary structure, dimer of identical or non-identical chains, which can be either B (brain type) or M (muscle type). With MM being the major form in skeletal muscle and myocardium, MB existing in myocardium, and BB existing in many tissues, especially brain. Predominantly found in skeletal muscle, but not in the heart.

The protein resides in the cytoplasm. It carries out the reaction creatine + ATP = N-phosphocreatine + ADP + H(+). Reversibly catalyzes the transfer of phosphate between ATP and various phosphogens (e.g. creatine phosphate). Creatine kinase isoenzymes play a central role in energy transduction in tissues with large, fluctuating energy demands, such as skeletal muscle, heart, brain and spermatozoa. This is Creatine kinase M-type from Gallus gallus (Chicken).